The chain runs to 546 residues: Probable protein kinase UbiB (546 aa).

Residues 124–502 (DFDIKPLASA…HVRQGQSRYL (379 aa)) form the Protein kinase domain. ATP contacts are provided by residues 130 to 138 (LASASIAQV) and lysine 153. The active-site Proton acceptor is aspartate 288. Transmembrane regions (helical) follow at residues 501–521 (YLLGIGATLVLSGTFLLVSRP) and 522–542 (EWGLMPGWLMAAGLVAWFVGW).

It belongs to the ABC1 family. UbiB subfamily.

It is found in the cell inner membrane. The protein operates within cofactor biosynthesis; ubiquinone biosynthesis [regulation]. Functionally, is probably a protein kinase regulator of UbiI activity which is involved in aerobic coenzyme Q (ubiquinone) biosynthesis. The sequence is that of Probable protein kinase UbiB from Escherichia fergusonii (strain ATCC 35469 / DSM 13698 / CCUG 18766 / IAM 14443 / JCM 21226 / LMG 7866 / NBRC 102419 / NCTC 12128 / CDC 0568-73).